Consider the following 220-residue polypeptide: MMSDPNNAPQDHDSGIVLASASPRRSQLLAGVGIAFDVVPSDAPEESVPEETPQQHAIRLSLLKAREVANRPEVKGRWFIGSDTIVVRDATILGKPRDARDAADMLGSLSGRSHCVISGYAVLDRITGKEVADAVTTVVRFRKLTDEEIQGYIATGEPFGKAGAYAIQGIGACMIPAIEGSYTNVVGLPLCEVVETLERLGAVRLFASDRPLCAHLDPPA.

The Proton acceptor role is filled by D83.

Belongs to the Maf family. YhdE subfamily. It depends on a divalent metal cation as a cofactor.

It localises to the cytoplasm. It catalyses the reaction dTTP + H2O = dTMP + diphosphate + H(+). It carries out the reaction UTP + H2O = UMP + diphosphate + H(+). Its function is as follows. Nucleoside triphosphate pyrophosphatase that hydrolyzes dTTP and UTP. May have a dual role in cell division arrest and in preventing the incorporation of modified nucleotides into cellular nucleic acids. This Syntrophotalea carbinolica (strain DSM 2380 / NBRC 103641 / GraBd1) (Pelobacter carbinolicus) protein is dTTP/UTP pyrophosphatase.